The primary structure comprises 306 residues: tRNA N6-adenosine threonylcarbamoyltransferase (306 aa).

Fe cation-binding residues include H110 and H114. Residues 132 to 136, D165, G178, D182, and N268 each bind substrate; that span reads IASGK. Position 292 (D292) interacts with Fe cation.

Belongs to the KAE1 / TsaD family. The cofactor is Fe(2+).

The protein resides in the cytoplasm. It carries out the reaction L-threonylcarbamoyladenylate + adenosine(37) in tRNA = N(6)-L-threonylcarbamoyladenosine(37) in tRNA + AMP + H(+). In terms of biological role, required for the formation of a threonylcarbamoyl group on adenosine at position 37 (t(6)A37) in tRNAs that read codons beginning with adenine. Is involved in the transfer of the threonylcarbamoyl moiety of threonylcarbamoyl-AMP (TC-AMP) to the N6 group of A37, together with TsaE and TsaB. TsaD likely plays a direct catalytic role in this reaction. In Malacoplasma penetrans (strain HF-2) (Mycoplasma penetrans), this protein is tRNA N6-adenosine threonylcarbamoyltransferase.